A 172-amino-acid chain; its full sequence is Small ribosomal subunit protein uS5 (172 aa).

Residues 7–70 (VVEHLVNVNR…QNAKKYMIEV (64 aa)) enclose the S5 DRBM domain.

Belongs to the universal ribosomal protein uS5 family. As to quaternary structure, part of the 30S ribosomal subunit. Contacts proteins S4 and S8.

With S4 and S12 plays an important role in translational accuracy. In terms of biological role, located at the back of the 30S subunit body where it stabilizes the conformation of the head with respect to the body. This chain is Small ribosomal subunit protein uS5, found in Orientia tsutsugamushi (strain Boryong) (Rickettsia tsutsugamushi).